The following is a 328-amino-acid chain: Renalase (328 aa).

FAD contacts are provided by residues A13, 32-33 (DK), R40, and 56-57 (QY). Substrate contacts are provided by residues 57 to 61 (YFTAR) and 96 to 98 (SPD). I128 contributes to the FAD binding site. Position 185 (T185) interacts with substrate. D302 lines the FAD pocket. R308 is a binding site for substrate. Position 309 (V309) interacts with FAD.

The protein belongs to the bacterial renalase family. It depends on FAD as a cofactor.

The catalysed reaction is 1,2-dihydro-beta-NAD + O2 + H(+) = H2O2 + NAD(+). It carries out the reaction 1,2-dihydro-beta-NADP + O2 + H(+) = H2O2 + NADP(+). It catalyses the reaction 1,6-dihydro-beta-NADP + O2 + H(+) = H2O2 + NADP(+). The enzyme catalyses 1,6-dihydro-beta-NAD + O2 + H(+) = H2O2 + NAD(+). In terms of biological role, catalyzes the oxidation of the 1,2-dihydro- and 1,6-dihydro- isomeric forms of beta-NAD(P) back to beta-NAD(P)+. Has a preference for 1,2-dihydro-beta-NAD as substrate. May serve to protect primary metabolism dehydrogenases from inhibition by the 1,2-dihydro- and 1,6-dihydro-beta-NAD(P) isomers. The chain is Renalase from Pseudomonas syringae pv. tomato (strain ATCC BAA-871 / DC3000).